We begin with the raw amino-acid sequence, 142 residues long: Ribosome-binding factor A (142 aa).

A disordered region spans residues 120 to 142 (TLGEVQSESDQPTTYETTTVNKT). Polar residues predominate over residues 123 to 142 (EVQSESDQPTTYETTTVNKT).

It belongs to the RbfA family. As to quaternary structure, monomer. Binds 30S ribosomal subunits, but not 50S ribosomal subunits or 70S ribosomes.

The protein resides in the cytoplasm. One of several proteins that assist in the late maturation steps of the functional core of the 30S ribosomal subunit. Associates with free 30S ribosomal subunits (but not with 30S subunits that are part of 70S ribosomes or polysomes). Required for efficient processing of 16S rRNA. May interact with the 5'-terminal helix region of 16S rRNA. The chain is Ribosome-binding factor A from Prochlorococcus marinus (strain MIT 9313).